We begin with the raw amino-acid sequence, 155 residues long: U4/U6.U5 small nuclear ribonucleoprotein 27 kDa protein (155 aa).

2 stretches are compositionally biased toward basic residues: residues 1–31 (MGRS…RERS) and 39–59 (RRSR…RHRS). The disordered stretch occupies residues 1-97 (MGRSRSRSPR…ITEEDLEGKT (97 aa)). 2 positions are modified to phosphoserine: Ser61 and Ser65. Over residues 66–97 (RLKERRDEEKKETKETKSKERQITEEDLEGKT) the composition is skewed to basic and acidic residues. 3 positions are modified to phosphoserine: Ser111, Ser114, and Ser132.

Belongs to the SNUT3 family. Part of a tri-snRNP complex. Post-translationally, phosphorylated in vitro by snRNP-associated protein kinase.

The protein resides in the nucleus. Its function is as follows. May play a role in mRNA splicing. This Homo sapiens (Human) protein is U4/U6.U5 small nuclear ribonucleoprotein 27 kDa protein (SNRNP27).